Consider the following 103-residue polypeptide: DNA-directed RNA polymerase subunit omega (103 aa).

The protein belongs to the RNA polymerase subunit omega family. In terms of assembly, the RNAP catalytic core consists of 2 alpha, 1 beta, 1 beta' and 1 omega subunit. When a sigma factor is associated with the core the holoenzyme is formed, which can initiate transcription.

It carries out the reaction RNA(n) + a ribonucleoside 5'-triphosphate = RNA(n+1) + diphosphate. In terms of biological role, promotes RNA polymerase assembly. Latches the N- and C-terminal regions of the beta' subunit thereby facilitating its interaction with the beta and alpha subunits. The polypeptide is DNA-directed RNA polymerase subunit omega (Streptococcus agalactiae serotype III (strain NEM316)).